Here is a 210-residue protein sequence, read N- to C-terminus: Probable GTP-binding protein EngB (210 aa).

Positions 25–199 (TGIEVAFAGR…RQKLDTWFSE (175 aa)) constitute an EngB-type G domain. GTP contacts are provided by residues 33-40 (GRSNAGKS), 60-64 (GRTQL), 78-81 (DLPG), 145-148 (TKAD), and 178-180 (FSS). 2 residues coordinate Mg(2+): serine 40 and threonine 62.

It belongs to the TRAFAC class TrmE-Era-EngA-EngB-Septin-like GTPase superfamily. EngB GTPase family. Mg(2+) serves as cofactor.

Functionally, necessary for normal cell division and for the maintenance of normal septation. The sequence is that of Probable GTP-binding protein EngB from Shigella flexneri.